The following is a 316-amino-acid chain: GTP cyclohydrolase FolE2 2 (316 aa).

Belongs to the GTP cyclohydrolase IV family.

The catalysed reaction is GTP + H2O = 7,8-dihydroneopterin 3'-triphosphate + formate + H(+). Its pathway is cofactor biosynthesis; 7,8-dihydroneopterin triphosphate biosynthesis; 7,8-dihydroneopterin triphosphate from GTP: step 1/1. Converts GTP to 7,8-dihydroneopterin triphosphate. The protein is GTP cyclohydrolase FolE2 2 of Burkholderia orbicola (strain MC0-3).